The sequence spans 159 residues: MVQDGNPPDDNVFRAFCNALYNTVDAPVTWFRETVVEPNQKKYPWYHQNYRRVPTIDQCYDDDVVCDFEANAQFKRDRAVDSEILSILRQRYEDCMMYEQPDHATKCRSLWDKYKSAEEAWFIKYGDLGAYGDARKAYMKQKHRMVWERRNGPLSDLTK.

It belongs to the complex I NDUFB10 subunit family. As to quaternary structure, complex I is composed of 45 different subunits.

It is found in the mitochondrion inner membrane. Accessory subunit of the mitochondrial membrane respiratory chain NADH dehydrogenase (Complex I), that is believed not to be involved in catalysis. Complex I functions in the transfer of electrons from NADH to the respiratory chain. The immediate electron acceptor for the enzyme is believed to be ubiquinone. This chain is NADH dehydrogenase [ubiquinone] 1 beta subcomplex subunit 10, found in Bombyx mori (Silk moth).